A 117-amino-acid polypeptide reads, in one-letter code: Aspartate 1-decarboxylase (117 aa).

Ser-25 acts as the Schiff-base intermediate with substrate; via pyruvic acid in catalysis. Ser-25 bears the Pyruvic acid (Ser) mark. Thr-57 contributes to the substrate binding site. The Proton donor role is filled by Tyr-58. 73 to 75 (GAA) serves as a coordination point for substrate.

The protein belongs to the PanD family. Heterooctamer of four alpha and four beta subunits. The cofactor is pyruvate. In terms of processing, is synthesized initially as an inactive proenzyme, which is activated by self-cleavage at a specific serine bond to produce a beta-subunit with a hydroxyl group at its C-terminus and an alpha-subunit with a pyruvoyl group at its N-terminus.

It localises to the cytoplasm. It carries out the reaction L-aspartate + H(+) = beta-alanine + CO2. It participates in cofactor biosynthesis; (R)-pantothenate biosynthesis; beta-alanine from L-aspartate: step 1/1. Its function is as follows. Catalyzes the pyruvoyl-dependent decarboxylation of aspartate to produce beta-alanine. The chain is Aspartate 1-decarboxylase from Bacteroides thetaiotaomicron (strain ATCC 29148 / DSM 2079 / JCM 5827 / CCUG 10774 / NCTC 10582 / VPI-5482 / E50).